The chain runs to 109 residues: uncharacterized protein (109 aa).

This sequence to M.jannaschii MJ1244 and MJ1245 and M.thermoautotrophicum MTH1110.

This is an uncharacterized protein from Methanococcus maripaludis (Methanococcus deltae).